Reading from the N-terminus, the 268-residue chain is Non-homologous end joining protein Ku (268 aa).

In terms of domain architecture, Ku spans 13 to 175 (VSLVTCPVTM…TLHDGNAVRN (163 aa)). Residues 174 to 194 (RNGGHPAARTRPASEAESADS) form a disordered region.

It belongs to the prokaryotic Ku family. In terms of assembly, homodimer. Interacts with LigD.

Functionally, with LigD forms a non-homologous end joining (NHEJ) DNA repair enzyme, which repairs dsDNA breaks with reduced fidelity. Binds linear dsDNA with 5'- and 3'- overhangs but not closed circular dsDNA nor ssDNA. Recruits and stimulates the ligase activity of LigD. In Gluconacetobacter diazotrophicus (strain ATCC 49037 / DSM 5601 / CCUG 37298 / CIP 103539 / LMG 7603 / PAl5), this protein is Non-homologous end joining protein Ku.